Consider the following 326-residue polypeptide: Metal-binding protein YtgA (326 aa).

A signal peptide spans 1–21; the sequence is MFFLHVRKYKHVIGGLLCLAG. The Fe(2+) site is built by His75, His141, His207, and Asp299.

It belongs to the bacterial solute-binding protein 9 family. In terms of assembly, monomer.

The protein resides in the periplasm. Its function is as follows. Part of the ATP-binding cassette (ABC) transport system YtgABCD involved in metal import. Binds Fe(2+), Mn(2+) and Ni(2+), with a preference for Fe(2+) and delivers them to the membrane permease for translocation into the cytoplasm. This is Metal-binding protein YtgA from Chlamydia muridarum (strain MoPn / Nigg).